The chain runs to 474 residues: Coronin-1C (474 aa).

WD repeat units follow at residues 78–118 (GHTG…LTLS), 128–168 (GHSK…ALIN), 172–202 (MHSD…RVID), 215–249 (AHEG…ALWN), and 263–303 (DTSN…PYVH). Positions 435–474 (VQNEAKLDEILKEIKSIKETICSQDERISKLEQQLAKMAA) form a coiled coil. Lys446 carries the post-translational modification N6-acetyllysine.

The protein belongs to the WD repeat coronin family. In terms of assembly, homotrimer. Binds F-actin. Interacts with RCC2. Interacts preferentially with nucleotide-free and GDP-bound RAC1. Interacts with VIM (via head domain). Interacts with MICAL2; this interaction recruits MICAL2 to the actin filaments. In terms of tissue distribution, detected in skeletal muscle (at protein level). Detected in fibroblasts (at protein level). Ubiquitous.

It is found in the cell membrane. The protein localises to the cell projection. The protein resides in the lamellipodium. It localises to the ruffle membrane. Its subcellular location is the cytoplasm. It is found in the cytoskeleton. The protein localises to the cell cortex. The protein resides in the endosome membrane. Its function is as follows. Plays a role in directed cell migration by regulating the activation and subcellular location of RAC1. Increases the presence of activated RAC1 at the leading edge of migrating cells. Required for normal organization of the cytoskeleton, including the actin cytoskeleton, microtubules and the vimentin intermediate filaments. Required for normal cell proliferation, cell migration, and normal formation of lamellipodia. Plays a role in endoplasmic reticulum-associated endosome fission: localizes to endosome membrane tubules and promotes recruitment of TMCC1, leading to recruitment of the endoplasmic reticulum to endosome tubules for fission. Endosome membrane fission of early and late endosomes is essential to separate regions destined for lysosomal degradation from carriers to be recycled to the plasma membrane. Required for normal distribution of mitochondria within cells. This Mus musculus (Mouse) protein is Coronin-1C (Coro1c).